Here is a 268-residue protein sequence, read N- to C-terminus: GTP cyclohydrolase 1 type 2 homolog (268 aa).

Residues His66, His67, Asp105, His227, and Glu231 each coordinate a divalent metal cation.

This sequence belongs to the GTP cyclohydrolase I type 2/NIF3 family. In terms of assembly, homohexamer.

The chain is GTP cyclohydrolase 1 type 2 homolog from Clostridium acetobutylicum (strain ATCC 824 / DSM 792 / JCM 1419 / IAM 19013 / LMG 5710 / NBRC 13948 / NRRL B-527 / VKM B-1787 / 2291 / W).